The sequence spans 151 residues: Transcriptional regulator MraZ (151 aa).

SpoVT-AbrB domains lie at Ile5–Glu52 and Ala81–Glu124.

This sequence belongs to the MraZ family. Forms oligomers.

It is found in the cytoplasm. The protein resides in the nucleoid. The protein is Transcriptional regulator MraZ of Marinomonas sp. (strain MWYL1).